The primary structure comprises 570 residues: PTS system lactose-specific EIICB component (570 aa).

Residues 9 to 410 (IEKGKPFFEK…VVDIIIYYPF (402 aa)) enclose the PTS EIIC type-3 domain. 9 consecutive transmembrane segments (helical) span residues 31 to 51 (GFISAMPVILFSSIFLLIAYV), 65 to 85 (AILMKPYNYTMGLVAFLVAGT), 104 to 124 (INFISTMLAAMCGFLFLASDP), 133 to 153 (AFMGTKGLLTAFLSAFVTVIV), 178 to 198 (FKDLIPFSAVIIILYALDLVI), 223 to 243 (GWIGVTIIFGAFALFWFVGIH), 283 to 303 (MFIVTFGGTGATLVVPFMFMW), 340 to 360 (VFFIPFVLAPIVNVWIFKLFV), and 382 to 402 (IIMGTGFGLWSFVLAITLIVV). The PTS EIIB type-3 domain occupies 467 to 570 (QTNVLVLCAG…LDFVQQQFEN (104 aa)). The active-site Phosphocysteine intermediate; for EIIB activity is the C474. C474 bears the Phosphocysteine; by EIIA mark.

It localises to the cell membrane. The enzyme catalyses lactose(out) + N(pros)-phospho-L-histidyl-[protein] = lactose 6-phosphate(in) + L-histidyl-[protein]. Its function is as follows. The phosphoenolpyruvate-dependent sugar phosphotransferase system (sugar PTS), a major carbohydrate active transport system, catalyzes the phosphorylation of incoming sugar substrates concomitantly with their translocation across the cell membrane. The enzyme II LacEF PTS system is involved in lactose transport. This chain is PTS system lactose-specific EIICB component, found in Staphylococcus aureus (strain N315).